The chain runs to 275 residues: Formamidopyrimidine-DNA glycosylase (275 aa).

Pro-2 acts as the Schiff-base intermediate with DNA in catalysis. Glu-3 (proton donor) is an active-site residue. Lys-59 serves as the catalytic Proton donor; for beta-elimination activity. DNA-binding residues include His-92, Arg-111, and Arg-155. Residues 240 to 274 (NVYGRAGKACPKCGTTIEKQVLGQRSSYYCPQCQR) form an FPG-type zinc finger. Arg-264 serves as the catalytic Proton donor; for delta-elimination activity.

This sequence belongs to the FPG family. Monomer. It depends on Zn(2+) as a cofactor.

The enzyme catalyses Hydrolysis of DNA containing ring-opened 7-methylguanine residues, releasing 2,6-diamino-4-hydroxy-5-(N-methyl)formamidopyrimidine.. The catalysed reaction is 2'-deoxyribonucleotide-(2'-deoxyribose 5'-phosphate)-2'-deoxyribonucleotide-DNA = a 3'-end 2'-deoxyribonucleotide-(2,3-dehydro-2,3-deoxyribose 5'-phosphate)-DNA + a 5'-end 5'-phospho-2'-deoxyribonucleoside-DNA + H(+). Functionally, involved in base excision repair of DNA damaged by oxidation or by mutagenic agents. Acts as a DNA glycosylase that recognizes and removes damaged bases. Has a preference for oxidized purines, such as 7,8-dihydro-8-oxoguanine (8-oxoG). Has AP (apurinic/apyrimidinic) lyase activity and introduces nicks in the DNA strand. Cleaves the DNA backbone by beta-delta elimination to generate a single-strand break at the site of the removed base with both 3'- and 5'-phosphates. This chain is Formamidopyrimidine-DNA glycosylase, found in Magnetococcus marinus (strain ATCC BAA-1437 / JCM 17883 / MC-1).